A 44-amino-acid polypeptide reads, in one-letter code: Cytochrome b559 subunit beta (44 aa).

A helical membrane pass occupies residues 19-35 (WLSVHALGVPSVFFLGA). His23 is a heme binding site.

Belongs to the PsbE/PsbF family. As to quaternary structure, heterodimer of an alpha subunit and a beta subunit. PSII is composed of 1 copy each of membrane proteins PsbA, PsbB, PsbC, PsbD, PsbE, PsbF, PsbH, PsbI, PsbJ, PsbK, PsbL, PsbM, PsbT, PsbX, PsbY, PsbZ, Psb30/Ycf12, peripheral proteins PsbO, CyanoQ (PsbQ), PsbU, PsbV and a large number of cofactors. It forms dimeric complexes. Heme b is required as a cofactor.

Its subcellular location is the cellular thylakoid membrane. In terms of biological role, this b-type cytochrome is tightly associated with the reaction center of photosystem II (PSII). PSII is a light-driven water:plastoquinone oxidoreductase that uses light energy to abstract electrons from H(2)O, generating O(2) and a proton gradient subsequently used for ATP formation. It consists of a core antenna complex that captures photons, and an electron transfer chain that converts photonic excitation into a charge separation. The protein is Cytochrome b559 subunit beta of Synechococcus elongatus (strain ATCC 33912 / PCC 7942 / FACHB-805) (Anacystis nidulans R2).